The sequence spans 185 residues: Ribosome-recycling factor (185 aa).

Belongs to the RRF family.

It is found in the cytoplasm. Responsible for the release of ribosomes from messenger RNA at the termination of protein biosynthesis. May increase the efficiency of translation by recycling ribosomes from one round of translation to another. The protein is Ribosome-recycling factor of Wigglesworthia glossinidia brevipalpis.